The following is a 424-amino-acid chain: 3-phosphoshikimate 1-carboxyvinyltransferase (424 aa).

3 residues coordinate 3-phosphoshikimate: Lys-21, Ser-22, and Arg-26. Lys-21 provides a ligand contact to phosphoenolpyruvate. Phosphoenolpyruvate-binding residues include Gly-92 and Arg-120. Ser-163, Ser-164, Gln-165, Ser-191, Asp-306, and Lys-333 together coordinate 3-phosphoshikimate. Phosphoenolpyruvate is bound at residue Gln-165. Asp-306 functions as the Proton acceptor in the catalytic mechanism. Phosphoenolpyruvate is bound by residues Arg-337, Arg-379, and Lys-405.

This sequence belongs to the EPSP synthase family. Monomer.

The protein localises to the cytoplasm. The enzyme catalyses 3-phosphoshikimate + phosphoenolpyruvate = 5-O-(1-carboxyvinyl)-3-phosphoshikimate + phosphate. Its pathway is metabolic intermediate biosynthesis; chorismate biosynthesis; chorismate from D-erythrose 4-phosphate and phosphoenolpyruvate: step 6/7. Functionally, catalyzes the transfer of the enolpyruvyl moiety of phosphoenolpyruvate (PEP) to the 5-hydroxyl of shikimate-3-phosphate (S3P) to produce enolpyruvyl shikimate-3-phosphate and inorganic phosphate. In Clostridium perfringens (strain 13 / Type A), this protein is 3-phosphoshikimate 1-carboxyvinyltransferase.